A 294-amino-acid polypeptide reads, in one-letter code: Probable enoyl-CoA hydratase echA12 (294 aa).

It belongs to the enoyl-CoA hydratase/isomerase family.

It catalyses the reaction a (3S)-3-hydroxyacyl-CoA = a (2E)-enoyl-CoA + H2O. The enzyme catalyses a 4-saturated-(3S)-3-hydroxyacyl-CoA = a (3E)-enoyl-CoA + H2O. Could possibly oxidize fatty acids using specific components. The chain is Probable enoyl-CoA hydratase echA12 (echA12) from Mycobacterium leprae (strain TN).